The sequence spans 350 residues: MNYQNDDLRIKEIKELLPPVALLEKFPATENAANTVAHARKAIHKILKGNDDRLLVVIGPCSIHDPVAAKEYATRLLALREELKDELEIVMRVYFEKPRTTVGWKGLINDPHMDNSFQINDGLRIARKLLLDINDSGLPAAGEFLDMITPQYLADLMSWGAIGARTTESQVHRELASGLSCPVGFKNGTDGTIKVAIDAINAAGAPHCFLSVTKWGHSAIVNTSGNGDCHIILRGGKEPNYSAKHVAEVKEGLNKAGLPAQVMIDFSHANSSKQFKKQMDVCADVCQQIAGGEKAIIGVMVESHLVEGNQSLESGEPLAYGKSITDACIGWEDTDALLRQLANAVKARRG.

The residue at position 244 (Lys244) is an N6-acetyllysine.

This sequence belongs to the class-I DAHP synthase family. Homotetramer.

It carries out the reaction D-erythrose 4-phosphate + phosphoenolpyruvate + H2O = 7-phospho-2-dehydro-3-deoxy-D-arabino-heptonate + phosphate. The protein operates within metabolic intermediate biosynthesis; chorismate biosynthesis; chorismate from D-erythrose 4-phosphate and phosphoenolpyruvate: step 1/7. Stereospecific condensation of phosphoenolpyruvate (PEP) and D-erythrose-4-phosphate (E4P) giving rise to 3-deoxy-D-arabino-heptulosonate-7-phosphate (DAHP). In Escherichia coli O157:H7, this protein is Phospho-2-dehydro-3-deoxyheptonate aldolase, Phe-sensitive (aroG).